The chain runs to 1288 residues: Peroxidasin homolog (1288 aa).

The signal sequence occupies residues 1–16 (MNLLLYLLLLVPWVLG). The LRRNT domain maps to 17–51 (SEDGCPAKCTCDKKGFTVDCSNAGLTRIPKGISSN). 7 LRR repeats span residues 27–49 (CDKK…KGIS), 50–72 (SNVR…DLEG), 73–96 (FPLL…ILDH), 97–120 (LPEL…ASES), 122–143 (PLAS…WLLQ), 145–168 (FPEL…LFEN), and 204–227 (AYCT…LLKC). The 49-residue stretch at 180–228 (NPWNCDCRVTKVKALLRKVEWERKAYCTNPVELRHQAIDEVEESLLKCA) folds into the LRRCT domain. An N-linked (GlcNAc...) asparagine glycan is attached at asparagine 247. Residues 304–323 (LRQSHHSNGAPQFTYKPRDN) form a disordered region. Ig-like C2-type domains lie at 314–400 (PQFT…FSLD) and 407–494 (PNIY…AKLT). Cysteine 335 and cysteine 384 are disulfide-bonded. LRR repeat units lie at residues 356–381 (SSRK…DSGR) and 387–412 (VNSL…IYEG). The cysteines at positions 428 and 478 are disulfide-linked. N-linked (GlcNAc...) asparagine glycosylation occurs at asparagine 594. Residues cysteine 624 and cysteine 640 are joined by a disulfide bond. Aspartate 718 provides a ligand contact to heme b. The active-site Proton acceptor is histidine 719. Residue aspartate 720 coordinates Ca(2+). 2 cysteine pairs are disulfide-bonded: cysteine 739-cysteine 749 and cysteine 743-cysteine 770. Asparagine 740 is a glycosylation site (N-linked (GlcNAc...) asparagine). Threonine 802, phenylalanine 804, aspartate 806, and serine 808 together coordinate Ca(2+). Asparagine 857 carries N-linked (GlcNAc...) asparagine glycosylation. Glutamate 876 and histidine 972 together coordinate heme b. LRR repeat units follow at residues 998 to 1022 (KAFF…LFAS) and 1049 to 1073 (SLDL…EYRQ). 2 disulfides stabilise this stretch: cysteine 1075-cysteine 1132 and cysteine 1173-cysteine 1200. The LRR 12 repeat unit spans residues 1168-1189 (LARLLCDNGDEIDRIQKDVFMY).

Belongs to the peroxidase family. XPO subfamily. Ca(2+) is required as a cofactor. The cofactor is heme b.

The protein localises to the secreted. It localises to the extracellular space. Its subcellular location is the extracellular matrix. It catalyses the reaction L-lysyl-[collagen] + L-methionyl-[collagen] + H2O2 = [collagen]-L-lysyl-N-S-L-methionyl-[collagen] + 2 H2O + H(+). The catalysed reaction is bromide + H2O2 = hypobromite + H2O. It carries out the reaction L-lysyl-[collagen] + L-methionyl-[collagen] + hypobromite = [collagen]-L-lysyl-N-S-L-methionyl-[collagen] + bromide + H2O + H(+). The enzyme catalyses L-tyrosyl-[protein] + bromide + H2O2 + H(+) = 3-bromo-L-tyrosyl-[protein] + 2 H2O. It catalyses the reaction hypobromite + L-tyrosyl-[protein] + H(+) = 3-bromo-L-tyrosyl-[protein] + H2O. In terms of biological role, catalyzes the two-electron oxidation of bromide by hydrogen peroxide and generates hypobromite as a reactive intermediate which mediates the formation of sulfilimine cross-links between methionine and hydroxylysine residues within an uncross-linked collagen IV NC1 hexamer. Plays a role in the attachment of tissues and in axonal guidance during early developmental stages. May functionally antagonize the peroxidasin pxn-2 to maintain neuronal development. The chain is Peroxidasin homolog from Caenorhabditis briggsae.